We begin with the raw amino-acid sequence, 544 residues long: Probable protein kinase UbiB (544 aa).

The Protein kinase domain occupies 123-500; the sequence is DFDEKALASA…RNKQRKSQYL (378 aa). ATP contacts are provided by residues 129-137 and Lys152; that span reads LASASIAQV. Asp286 acts as the Proton acceptor in catalysis. A run of 2 helical transmembrane segments spans residues 499–519 and 522–542; these read YLLG…ISAS and MAIA…YKSG.

The protein belongs to the ABC1 family. UbiB subfamily.

It is found in the cell inner membrane. It participates in cofactor biosynthesis; ubiquinone biosynthesis [regulation]. Functionally, is probably a protein kinase regulator of UbiI activity which is involved in aerobic coenzyme Q (ubiquinone) biosynthesis. Required for the expression of 2'-N-acetyltransferase. In Providencia stuartii, this protein is Probable protein kinase UbiB.